The following is a 401-amino-acid chain: Nicotinate phosphoribosyltransferase (401 aa).

His-221 carries the post-translational modification Phosphohistidine; by autocatalysis.

This sequence belongs to the NAPRTase family. Transiently phosphorylated on a His residue during the reaction cycle. Phosphorylation strongly increases the affinity for substrates and increases the rate of nicotinate D-ribonucleotide production. Dephosphorylation regenerates the low-affinity form of the enzyme, leading to product release.

The enzyme catalyses nicotinate + 5-phospho-alpha-D-ribose 1-diphosphate + ATP + H2O = nicotinate beta-D-ribonucleotide + ADP + phosphate + diphosphate. Its pathway is cofactor biosynthesis; NAD(+) biosynthesis; nicotinate D-ribonucleotide from nicotinate: step 1/1. Its function is as follows. Catalyzes the synthesis of beta-nicotinate D-ribonucleotide from nicotinate and 5-phospho-D-ribose 1-phosphate at the expense of ATP. The sequence is that of Nicotinate phosphoribosyltransferase from Yersinia enterocolitica serotype O:8 / biotype 1B (strain NCTC 13174 / 8081).